A 449-amino-acid chain; its full sequence is Trigger factor (449 aa).

Residues 173–258 (GDRVTVDFVG…LKKVEWPHLP (86 aa)) form the PPIase FKBP-type domain.

It belongs to the FKBP-type PPIase family. Tig subfamily.

The protein localises to the cytoplasm. It carries out the reaction [protein]-peptidylproline (omega=180) = [protein]-peptidylproline (omega=0). Functionally, involved in protein export. Acts as a chaperone by maintaining the newly synthesized protein in an open conformation. Functions as a peptidyl-prolyl cis-trans isomerase. The polypeptide is Trigger factor (Burkholderia pseudomallei (strain 1710b)).